The primary structure comprises 140 residues: MAVIYKTTAHASAGREGVVQTVDGFTVSLAFPKPGATHQDKNNPEQLFASAYAGCFSQAVRVVLQQHQLQLATQPIVGVSVELHDQDGLFHIKAGVELAITGVDQTTAQTVITAAHAMCPFSRLIKPENFLGLTLNGAKL.

It belongs to the OsmC/Ohr family.

This Mycoplasma pneumoniae (strain ATCC 29342 / M129 / Subtype 1) (Mycoplasmoides pneumoniae) protein is Organic hydroperoxide resistance protein-like.